Consider the following 307-residue polypeptide: UDP-3-O-acyl-N-acetylglucosamine deacetylase (307 aa).

Residues His-78, His-241, and Asp-245 each coordinate Zn(2+). The active-site Proton donor is His-268.

This sequence belongs to the LpxC family. Zn(2+) is required as a cofactor.

The enzyme catalyses a UDP-3-O-[(3R)-3-hydroxyacyl]-N-acetyl-alpha-D-glucosamine + H2O = a UDP-3-O-[(3R)-3-hydroxyacyl]-alpha-D-glucosamine + acetate. It functions in the pathway glycolipid biosynthesis; lipid IV(A) biosynthesis; lipid IV(A) from (3R)-3-hydroxytetradecanoyl-[acyl-carrier-protein] and UDP-N-acetyl-alpha-D-glucosamine: step 2/6. Catalyzes the hydrolysis of UDP-3-O-myristoyl-N-acetylglucosamine to form UDP-3-O-myristoylglucosamine and acetate, the committed step in lipid A biosynthesis. The polypeptide is UDP-3-O-acyl-N-acetylglucosamine deacetylase (Verminephrobacter eiseniae (strain EF01-2)).